Consider the following 70-residue polypeptide: Large ribosomal subunit protein eL38 (70 aa).

This sequence belongs to the eukaryotic ribosomal protein eL38 family.

This is Large ribosomal subunit protein eL38 (RPL38) from Branchiostoma belcheri (Amphioxus).